Consider the following 345-residue polypeptide: N-acetyl-gamma-glutamyl-phosphate reductase (345 aa).

Residue Cys-149 is part of the active site.

The protein belongs to the NAGSA dehydrogenase family. Type 1 subfamily.

The protein resides in the cytoplasm. It carries out the reaction N-acetyl-L-glutamate 5-semialdehyde + phosphate + NADP(+) = N-acetyl-L-glutamyl 5-phosphate + NADPH + H(+). It participates in amino-acid biosynthesis; L-arginine biosynthesis; N(2)-acetyl-L-ornithine from L-glutamate: step 3/4. Its function is as follows. Catalyzes the NADPH-dependent reduction of N-acetyl-5-glutamyl phosphate to yield N-acetyl-L-glutamate 5-semialdehyde. The chain is N-acetyl-gamma-glutamyl-phosphate reductase from Bacillus cereus (strain AH187).